Consider the following 146-residue polypeptide: D-aminoacyl-tRNA deacylase (146 aa).

The Gly-cisPro motif, important for rejection of L-amino acids motif lies at 138–139 (GP).

Belongs to the DTD family. As to quaternary structure, homodimer.

The protein localises to the cytoplasm. It catalyses the reaction glycyl-tRNA(Ala) + H2O = tRNA(Ala) + glycine + H(+). The catalysed reaction is a D-aminoacyl-tRNA + H2O = a tRNA + a D-alpha-amino acid + H(+). In terms of biological role, an aminoacyl-tRNA editing enzyme that deacylates mischarged D-aminoacyl-tRNAs. Also deacylates mischarged glycyl-tRNA(Ala), protecting cells against glycine mischarging by AlaRS. Acts via tRNA-based rather than protein-based catalysis; rejects L-amino acids rather than detecting D-amino acids in the active site. By recycling D-aminoacyl-tRNA to D-amino acids and free tRNA molecules, this enzyme counteracts the toxicity associated with the formation of D-aminoacyl-tRNA entities in vivo and helps enforce protein L-homochirality. The protein is D-aminoacyl-tRNA deacylase of Xanthomonas campestris pv. campestris (strain 8004).